Here is a 417-residue protein sequence, read N- to C-terminus: MSSKYPRSVRRCLPLCALTLEAALILLFYFFTQYDASLEDQKGLVASYQVGQDLTVMAAIGFGFLTSSFRRHSWSSVAFSLFMLALGVQWAILLDGFLSQFPPGKVVITLFSIRLATTSALSVLISVDAVLGKVNLVQLVVMVLVEVTALGTVRMVISNIFNTDYHMNLMHIYVFAAYFGLSVAWCLPKPLPKGTEDKDQIATIPSLSAMLGALFLWMFWPSFNSALLRSPIERKNAVFNTYYAVAVSVVTAISGSSLAHPQGKISMSYMHNAVLAGGVAVGTSCHLITSPWLAMVLGLVAGLISIGGAKYLPGCCNRVLGIYHSSVMHYNFSLLGLLGEIIYIVLLVHHTVWNGNGMIGFQVLLRIGEFSLATTIALTSGLLTGLLLNLKIWKAPHAAKYFDDQVFWKFPHLAVEF.

11 helical membrane passes run 12-32 (CLPL…YFFT), 44-64 (LVAS…GFGF), 77-97 (VAFS…LDGF), 125-145 (ISVD…MVLV), 172-192 (IYVF…KPLP), 203-223 (TIPS…WPSF), 238-258 (VFNT…GSSL), 265-285 (ISMS…GTSC), 287-307 (LITS…ISIG), 331-351 (NFSL…VHHT), and 358-378 (MIGF…TIAL).

Belongs to the ammonium transporter (TC 2.A.49) family. Rh subfamily.

It localises to the membrane. May be part of an oligomeric complex which is likely to have a transport or channel function in the erythrocyte membrane. This Pan troglodytes (Chimpanzee) protein is RH-like protein IA.